We begin with the raw amino-acid sequence, 320 residues long: Ribosomal RNA small subunit methyltransferase H (320 aa).

S-adenosyl-L-methionine-binding positions include 36 to 38 (GGH), Asp-56, Phe-82, Asp-103, and Gln-110.

This sequence belongs to the methyltransferase superfamily. RsmH family.

Its subcellular location is the cytoplasm. The enzyme catalyses cytidine(1402) in 16S rRNA + S-adenosyl-L-methionine = N(4)-methylcytidine(1402) in 16S rRNA + S-adenosyl-L-homocysteine + H(+). Functionally, specifically methylates the N4 position of cytidine in position 1402 (C1402) of 16S rRNA. In Chromobacterium violaceum (strain ATCC 12472 / DSM 30191 / JCM 1249 / CCUG 213 / NBRC 12614 / NCIMB 9131 / NCTC 9757 / MK), this protein is Ribosomal RNA small subunit methyltransferase H.